Here is a 62-residue protein sequence, read N- to C-terminus: Photosystem II reaction center protein Z (62 aa).

Helical transmembrane passes span 8–28 (AVFA…VVFA) and 41–61 (FSGT…NSLI).

It belongs to the PsbZ family. As to quaternary structure, PSII is composed of 1 copy each of membrane proteins PsbA, PsbB, PsbC, PsbD, PsbE, PsbF, PsbH, PsbI, PsbJ, PsbK, PsbL, PsbM, PsbT, PsbY, PsbZ, Psb30/Ycf12, at least 3 peripheral proteins of the oxygen-evolving complex and a large number of cofactors. It forms dimeric complexes.

The protein localises to the plastid. It localises to the chloroplast thylakoid membrane. May control the interaction of photosystem II (PSII) cores with the light-harvesting antenna, regulates electron flow through the 2 photosystem reaction centers. PSII is a light-driven water plastoquinone oxidoreductase, using light energy to abstract electrons from H(2)O, generating a proton gradient subsequently used for ATP formation. The polypeptide is Photosystem II reaction center protein Z (Phalaenopsis aphrodite subsp. formosana (Moth orchid)).